We begin with the raw amino-acid sequence, 61 residues long: Lens epithelial cell protein LEP503 (61 aa).

As to expression, restricted to lens epithelial cells.

In terms of biological role, may play a role in lens epithelial cell differentiation. This Homo sapiens (Human) protein is Lens epithelial cell protein LEP503 (LENEP).